A 254-amino-acid polypeptide reads, in one-letter code: 5'-nucleotidase SurE (254 aa).

Positions 8, 9, 40, and 93 each coordinate a divalent metal cation.

The protein belongs to the SurE nucleotidase family. It depends on a divalent metal cation as a cofactor.

Its subcellular location is the cytoplasm. It catalyses the reaction a ribonucleoside 5'-phosphate + H2O = a ribonucleoside + phosphate. Nucleotidase that shows phosphatase activity on nucleoside 5'-monophosphates. The chain is 5'-nucleotidase SurE from Actinobacillus pleuropneumoniae serotype 5b (strain L20).